Consider the following 1308-residue polypeptide: Misshapen-like kinase 1 (1308 aa).

The Protein kinase domain maps to 25–289 (FELVEVVGNG…TEQLLKFPFI (265 aa)). Residues 31–39 (VGNGTYGQV) and lysine 54 contribute to the ATP site. Residue aspartate 153 is the Proton acceptor of the active site. Disordered stretches follow at residues 299–347 (RIQL…NVPG), 363–383 (KSNS…QRDP), and 395–862 (QRRI…GGTM). Over residues 317 to 333 (EETEYEYSGSEEEDDSH) the composition is skewed to acidic residues. Residues serine 324 and serine 326 each carry the phosphoserine modification. Low complexity predominate over residues 371–380 (QQQQLQQQQQ). Positions 396–466 (RRIEEQKEER…EEQRQSERLQ (71 aa)) are enriched in basic and acidic residues. Over residues 479–497 (LQQQQQQQQLQKQQQQQQQ) the composition is skewed to low complexity. Residues arginine 503 and arginine 511 each carry the omega-N-methylarginine modification. A compositionally biased stretch (basic and acidic residues) spans 520 to 530 (AWAREVEERAR). Residues 600–610 (RSQSLQDQPTR) are compositionally biased toward polar residues. Low complexity predominate over residues 623–633 (PAAVPTPTATP). Serine 644 bears the Phosphoserine mark. Positions 673–685 (QRTSSIATALNTS) are enriched in polar residues. Phosphoserine occurs at positions 702, 720, 729, 745, 746, and 750. Over residues 702-714 (DLRRSDPGWERSD) the composition is skewed to basic and acidic residues. The span at 773-797 (AIGEDFVLLKERTLDEAPKPPKKAM) shows a compositional bias: basic and acidic residues. Residues 804-820 (EEVESSEEEEEEGDGEP) show a composition bias toward acidic residues. The interval 842 to 1308 (MVVHDVEEIS…TLNRNCIMNW (467 aa)) is mediates interaction with RAP2A. A Phosphothreonine modification is found at threonine 867. The interval 881–918 (GYTNLPDVVQPSHSPTENSKGQSPPTKDGGSDYQSRGL) is disordered. The span at 891–905 (PSHSPTENSKGQSPP) shows a compositional bias: polar residues. Residues 995–1282 (NSEILCAALW…KFLCERNDKV (288 aa)) form the CNH domain.

It belongs to the protein kinase superfamily. STE Ser/Thr protein kinase family. STE20 subfamily. In terms of assembly, interacts with RAP2A and TANC1. Interacts with NCK1. Mg(2+) is required as a cofactor. In terms of processing, autophosphorylated. In terms of tissue distribution, appears to be ubiquitous, expressed in all tissue types examined. Highly expressed in the brain, moderately expressed in kidney and spleen, low levels present in heart and skeletal muscle. Isoform 2 is more abundant in the brain than isoform 1.

The protein localises to the cytoplasm. It localises to the postsynaptic density. The protein resides in the cell projection. Its subcellular location is the axon. It is found in the dendrite. The enzyme catalyses L-seryl-[protein] + ATP = O-phospho-L-seryl-[protein] + ADP + H(+). The catalysed reaction is L-threonyl-[protein] + ATP = O-phospho-L-threonyl-[protein] + ADP + H(+). Its function is as follows. Serine/threonine kinase which acts as a negative regulator of Ras-related Rap2-mediated signal transduction to control neuronal structure and AMPA receptor trafficking. Required for normal synaptic density, dendrite complexity, as well as surface AMPA receptor expression in hippocampal neurons. Can activate the JNK and MAPK14/p38 pathways and mediates stimulation of the stress-activated protein kinase MAPK14/p38 MAPK downstream of the Raf/ERK pathway. Phosphorylates TANC1 upon stimulation by RAP2A, MBP and SMAD1. Has an essential function in negative selection of thymocytes, perhaps by coupling NCK1 to activation of JNK1. Activator of the Hippo signaling pathway which plays a pivotal role in organ size control and tumor suppression by restricting proliferation and promoting apoptosis. MAP4Ks act in parallel to and are partially redundant with STK3/MST2 and STK4/MST2 in the phosphorylation and activation of LATS1/2, and establish MAP4Ks as components of the expanded Hippo pathway. This is Misshapen-like kinase 1 from Mus musculus (Mouse).